A 107-amino-acid polypeptide reads, in one-letter code: Replication initiation control protein YabA (107 aa).

Positions 81, 83, 97, and 100 each coordinate Zn(2+).

This sequence belongs to the YabA family. Homotetramer. Interacts with both DnaA and DnaN, acting as a bridge between these two proteins. It depends on Zn(2+) as a cofactor.

It localises to the cytoplasm. It is found in the nucleoid. In terms of biological role, involved in control of chromosome replication initiation. Inhibits the cooperative binding of DnaA to the oriC region, thus negatively regulating initiation of chromosome replication. Inhibits the ability of DnaA-ATP to form a helix on DNA; does not disassemble preformed DnaA-DNA helices. Decreases the residence time of DnaA on the chromosome at its binding sites (oriC, replication forks and promoter-binding sites). Tethers DnaA to the replication machinery via the DNA polymerase beta sliding clamp subunit (dnaN). Associates with oriC and other DnaA targets on the chromosome in a DnaA-dependent manner. This Streptococcus pyogenes serotype M3 (strain ATCC BAA-595 / MGAS315) protein is Replication initiation control protein YabA.